The chain runs to 310 residues: Membrane protein insertase YidC 2 (310 aa).

Residues 1–23 (MKKTLKRILFSSLSLSILLLLTG) form the signal peptide. Cys24 is lipidated: N-palmitoyl cysteine. Cys24 carries the S-diacylglycerol cysteine lipid modification. 5 consecutive transmembrane segments (helical) span residues 33–53 (PYGV…TYFA), 58–78 (LGFG…ILPL), 135–155 (FGGI…AIFF), 180–200 (LTVI…QGVP), and 219–239 (VFMS…GGIF). The interval 262-310 (EYTKNPPKAYKSNNARKDVTSSTKTTESNQAIITSKKTNRNAGKQKRRG) is disordered. Positions 281-297 (TSSTKTTESNQAIITSK) are enriched in polar residues. Over residues 298–310 (KTNRNAGKQKRRG) the composition is skewed to basic residues.

The protein belongs to the OXA1/ALB3/YidC family. Type 2 subfamily.

Its subcellular location is the cell membrane. Required for the insertion and/or proper folding and/or complex formation of integral membrane proteins into the membrane. Involved in integration of membrane proteins that insert both dependently and independently of the Sec translocase complex, as well as at least some lipoproteins. The sequence is that of Membrane protein insertase YidC 2 from Streptococcus agalactiae serotype III (strain NEM316).